We begin with the raw amino-acid sequence, 251 residues long: Capsid protein (251 aa).

Positions 1–29 are disordered; sequence MPKRDAPWRSMAGTSKVSRNANYSPRSGI. Positions 3-20 match the Bipartite nuclear localization signal motif; it reads KRDAPWRSMAGTSKVSRN. Positions 12-25 are enriched in polar residues; it reads AGTSKVSRNANYSP. The Nuclear localization signal motif lies at 35–49; sequence KAAEWVNRPMYRKPR. A zinc finger lies at 63–80; the sequence is CEGPCKVQSFEQRHDILH. Residues 96-117 carry the Nuclear export signal motif; the sequence is ITHRVGKRFCVKSVYILGKIWM. The Bipartite nuclear localization signal signature appears at 195–242; the sequence is RRFWKVNNHVVYNHQEAGKYENHTENALLLYMACTHASNPVYATLKIR.

Belongs to the geminiviridae capsid protein family. In terms of assembly, homomultimer. Binds to single-stranded and double-stranded viral DNA. Interacts (via nuclear localization signals) with host importin alpha-1a.

Its subcellular location is the virion. The protein localises to the host nucleus. Its function is as follows. Encapsidates the viral DNA into characteristic twinned ('geminate') particles. Binds the genomic viral ssDNA and shuttles it into and out of the cell nucleus. The CP of bipartite geminiviruses is not required for cell-to-cell or systemic movement. The sequence is that of Capsid protein from Solanum tuberosum (Potato).